A 309-amino-acid polypeptide reads, in one-letter code: Protease HtpX homolog (309 aa).

2 helical membrane-spanning segments follow: residues 15–35 (NAVLTTYCVIFAFIGLLVDVI) and 54–74 (IFPTITVIMFLVAFVVIVVCI). His165 provides a ligand contact to Zn(2+). The active site involves Glu166. Zn(2+) is bound at residue His169. Transmembrane regions (helical) follow at residues 181 to 201 (VGILSNIMLLVANFSVYFFMG) and 213 to 233 (MILLVLQIVLPFLTLILQMYL). Position 238 (Glu238) interacts with Zn(2+).

It belongs to the peptidase M48B family. Zn(2+) serves as cofactor.

Its subcellular location is the cell inner membrane. In Helicobacter acinonychis (strain Sheeba), this protein is Protease HtpX homolog.